A 291-amino-acid polypeptide reads, in one-letter code: Transmembrane protein 41B (291 aa).

Over residues 1 to 11 (MAKGRVAERSQ) the composition is skewed to basic and acidic residues. Positions 1–38 (MAKGRVAERSQTEMLHSTPAGDRAVGTQGSAAPGNKDH) are disordered. A Phosphothreonine modification is found at Thr-18. 6 helical membrane passes run 52 to 72 (TSLL…FLVY), 109 to 129 (FYVQ…TFAI), 147 to 169 (LALF…LSYL), 197 to 217 (LINY…FINI), 225 to 245 (PLKV…FVAI), and 262 to 282 (SWNS…PAIF). Positions 140–251 (GFLYPFPLAL…FVAIKAGTTL (112 aa)) are VTT domain; required for its function in autophagy.

Belongs to the TMEM41 family. Interacts with VMP1. Interacts with COPA, COPB1, VDAC1 and ERLIN2. Interacts with ATG2A. Interacts with SURF4.

The protein localises to the endoplasmic reticulum membrane. Its subcellular location is the endomembrane system. It catalyses the reaction a 1,2-diacyl-sn-glycero-3-phospho-L-serine(in) = a 1,2-diacyl-sn-glycero-3-phospho-L-serine(out). The enzyme catalyses cholesterol(in) = cholesterol(out). The catalysed reaction is a 1,2-diacyl-sn-glycero-3-phosphocholine(in) = a 1,2-diacyl-sn-glycero-3-phosphocholine(out). It carries out the reaction a 1,2-diacyl-sn-glycero-3-phosphoethanolamine(in) = a 1,2-diacyl-sn-glycero-3-phosphoethanolamine(out). Its function is as follows. Phospholipid scramblase involved in lipid homeostasis and membrane dynamics processes. Has phospholipid scramblase activity toward cholesterol and phosphatidylserine, as well as phosphatidylethanolamine and phosphatidylcholine. Required for autophagosome formation: participates in early stages of autophagosome biogenesis at the endoplasmic reticulum (ER) membrane by reequilibrating the leaflets of the ER as lipids are extracted by ATG2 (ATG2A or ATG2B) to mediate autophagosome assembly. In addition to autophagy, involved in other processes in which phospholipid scramblase activity is required. Required for normal motor neuron development. In Rattus norvegicus (Rat), this protein is Transmembrane protein 41B.